The following is a 204-amino-acid chain: Putative rubrerythrin (204 aa).

The Ferritin-like diiron domain occupies 1–159 (MINNFFVINM…KLLKEVEEGT (159 aa)). Residues E24, E57, E107, E110, E141, H144, C171, C174, C187, and C190 each coordinate Fe(3+). In terms of domain architecture, Rubredoxin-like spans 166-204 (PVEWVCRKCGFVHLGKEPPEKCPSCSHPRKYFEVKCEKY).

Homodimer. Possesses two rubredoxin-like centers and two non-sulfur oxo-bridged di-iron centers per dimer. Fe(3+) serves as cofactor.

It is found in the cytoplasm. Functionally, may provide oxidative stress protection via catalytic reduction of intracellular hydrogen peroxide. The polypeptide is Putative rubrerythrin (Methanocaldococcus jannaschii (strain ATCC 43067 / DSM 2661 / JAL-1 / JCM 10045 / NBRC 100440) (Methanococcus jannaschii)).